We begin with the raw amino-acid sequence, 64 residues long: Beta-defensin 2 (64 aa).

A signal peptide spans 1–22; it reads MRLHHLLLVLFFVVLSAGSGFT. Disulfide bonds link cysteine 31-cysteine 60, cysteine 38-cysteine 53, and cysteine 43-cysteine 61.

Belongs to the beta-defensin family.

It localises to the secreted. In terms of biological role, has bactericidal activity. The polypeptide is Beta-defensin 2 (DEFB2) (Ovis aries (Sheep)).